The following is a 317-amino-acid chain: Melanocyte-stimulating hormone receptor (317 aa).

Topologically, residues 1 to 37 (MPVQGSQRRLLGSLNSTPTATPHLGLAANQTGARCLE) are extracellular. Asn-29 carries an N-linked (GlcNAc...) asparagine glycan. The chain crosses the membrane as a helical span at residues 38-63 (VSVPDGLFLSLGLVSLVENVLVVTAI). Over 64–72 (AKNRNLHSP) the chain is Cytoplasmic. The helical transmembrane segment at 73–93 (MYCFICCLALSDLLVSGSNML) threads the bilayer. Residues 94 to 118 (ETAVTLLLEAGVLAARAAVVQQLDN) are Extracellular-facing. Residues 119 to 140 (VIDVITCSSMLSSLCFLGAIAV) traverse the membrane as a helical segment. Topologically, residues 141–163 (DRYISIFYALRYHSIVTLPRARR) are cytoplasmic. The chain crosses the membrane as a helical span at residues 164-183 (AVAAIWVASVLFSTLFIAYY). Residues 184-191 (DHAAVLLC) lie on the Extracellular side of the membrane. The chain crosses the membrane as a helical span at residues 192–211 (LVIFFLAMLVLMAVLYVHML). Residues 212-240 (ARACQHAQGIARLHKRQRLAHQGFGLKGA) lie on the Cytoplasmic side of the membrane. Residues 241–266 (ATLTILLGIFFLCWGPFFLHLTLIVL) form a helical membrane-spanning segment. The Extracellular segment spans residues 267–279 (CPQHPTCSCIFKN). The chain crosses the membrane as a helical span at residues 280–300 (FNLFLALIICNAIIDPLIYAF). The Cytoplasmic portion of the chain corresponds to 301 to 317 (RSQELRRTLKEVLLCSW). Cys-315 carries S-palmitoyl cysteine lipidation.

This sequence belongs to the G-protein coupled receptor 1 family. Interacts with MGRN1, but does not undergo MGRN1-mediated ubiquitination; this interaction competes with GNAS-binding and thus inhibits agonist-induced cAMP production. Interacts with OPN3; the interaction results in a decrease in MC1R-mediated cAMP signaling and ultimately a decrease in melanin production in melanocytes.

The protein resides in the cell membrane. Its function is as follows. Receptor for MSH (alpha, beta and gamma) and ACTH. The activity of this receptor is mediated by G proteins which activate adenylate cyclase. Mediates melanogenesis, the production of eumelanin (black/brown) and phaeomelanin (red/yellow), via regulation of cAMP signaling in melanocytes. The sequence is that of Melanocyte-stimulating hormone receptor (MC1R) from Papio anubis (Olive baboon).